Reading from the N-terminus, the 263-residue chain is MLIAGYLTDWRIMTTAQLRPIAPQKLHFSENLSVWVSDAQCRLVVSQPALDPTLWNTYLQGALRAYSKHGVECTLDLDAISDGSDTQLFFAAIDIGGDVVGGARVIGPLRSADDSHAVVEWAGNPGLSAVRKMINDRAPFGVVEVKSGWVNSDAQRSDAIAAALARALPLSMSLLGVQFVMGTAAAHALDRWRSSGGVIAARIPAAAYPDERYRTKMIWWDRRTLANHAEPKQLSRMLVESRKLLRDVEALSATTAATAGAEQ.

This is an uncharacterized protein from Mycobacterium tuberculosis (strain CDC 1551 / Oshkosh).